Consider the following 634-residue polypeptide: Carbon monoxide dehydrogenase 2 (634 aa).

[4Fe-4S] cluster is bound by residues C44, C53, C56, C61, and C73. Residues H264, C343, C453, C484, and C525 each coordinate [Ni-4Fe-5S] cluster.

The protein belongs to the Ni-containing carbon monoxide dehydrogenase family. Homodimer. Requires [4Fe-4S] cluster as cofactor. [Ni-4Fe-5S] cluster is required as a cofactor.

The catalysed reaction is CO + 2 oxidized [2Fe-2S]-[ferredoxin] + H2O = 2 reduced [2Fe-2S]-[ferredoxin] + CO2 + 2 H(+). Its function is as follows. CODH oxidizes carbon monoxide coupled, via CooF, to the reduction of a hydrogen cation by a hydrogenase (possibly CooH). In Methanosarcina mazei (strain ATCC BAA-159 / DSM 3647 / Goe1 / Go1 / JCM 11833 / OCM 88) (Methanosarcina frisia), this protein is Carbon monoxide dehydrogenase 2 (cooS2).